Reading from the N-terminus, the 100-residue chain is UPF0251 protein swp_0615 (100 aa).

Belongs to the UPF0251 family.

This Shewanella piezotolerans (strain WP3 / JCM 13877) protein is UPF0251 protein swp_0615.